We begin with the raw amino-acid sequence, 522 residues long: Exo-alpha-(1-&gt;6)-L-arabinofuranosidase (522 aa).

E39, N84, and N185 together coordinate alpha-L-arabinofuranose. Catalysis depends on E186, which acts as the Proton donor/acceptor. Alpha-L-arabinofuranose contacts are provided by Y257, E310, and Q370. The active-site Nucleophile is the E310.

It belongs to the glycosyl hydrolase 51 family. As to quaternary structure, homohexamer; trimer of dimers.

It catalyses the reaction Hydrolysis of terminal non-reducing alpha-L-arabinofuranoside residues in alpha-L-arabinosides.. It carries out the reaction (20S)-ginsenoside Rc + H2O = L-arabinofuranose + (20S)-ginsenoside Rd. With respect to regulation, completely inhibited by Cu(2+) and partially inhibited by Co(2+) and Ba(2+). In terms of biological role, catalyzes the hydrolysis of p-nitrophenyl-alpha-L-arabinofuranoside (pNP-alphaL-Af) and the hydrolysis of the terminal alpha-L-arabinofuranoside at the C20 position of ginsenoside Rc to produce ginsenoside Rd. Cannot hydrolyze p-nitrophenyl-alpha-L-arabinopyranoside (pNP-alphaL-Ap) and ginsenoside Rb2. This chain is Exo-alpha-(1-&gt;6)-L-arabinofuranosidase, found in Bifidobacterium longum.